A 146-amino-acid chain; its full sequence is MADFHFQGTSALALDAKGRVTVPARHRESLVSLAGSQLTLTKHPEGCLMVFPRPVWEGFRAKVEALPMAASGWKRIFLGSAMDVEIDSGSRMLISPELRAAAGLVHDVLLIGMGNHLELWDAQRQASAEAAVLQQPMPDVLQDFSF.

2 consecutive SpoVT-AbrB domains span residues 9–55 and 81–124; these read TSAL…PRPV and AMDV…DAQR.

This sequence belongs to the MraZ family. As to quaternary structure, forms oligomers.

Its subcellular location is the cytoplasm. The protein resides in the nucleoid. This chain is Transcriptional regulator MraZ, found in Leptothrix cholodnii (strain ATCC 51168 / LMG 8142 / SP-6) (Leptothrix discophora (strain SP-6)).